The sequence spans 936 residues: MPSRAASPALSENEFDITGALFQNDSDSDAETQKPTKRKKVPAAPNVNLDFLGEANAGDSDEDDEAFIAEKQTSANRKSANLKGRTVKKGGGFQAMGLNANLLKAIARKGFSVPTPIQRKTIPVIMEDQDVVGMARTGSGKTAAFVIPMIEKLKSHSTKFGARGLILSPSRELALQTLKVVKELGKGTDLKSVLLVGGDSLEEQFGMMAGNPDIVIATPGRFLHLKVEMNLDLSSIKYVVFDEADRLFEMGFAAQLTEILHGLPSTRQTLLFSATLPKSLVEFARAGLQDPTLVRLDTESKISPDLQNAFFSVKSAEKEGALLYILNEVIKMPTGPTEASLRLKEKGPEDSKNKKRKRAEMERAVNMKESPTKHSTIVFAATKHHVDYLYSLLREAGFAVSYVYGSLDQTARKIQVQNFRTGISNILVVTDVAARGIDIPILANVINYDFPSQPKIFVHRVGRTARAGRKGWSYSLVRDADAPYLLDLQLFLGRKLVLGRESDQVNFAEDVAVGSLPRDGLSQTCEWVSRVLDDDADIFAQRAVSTKGEKLYLRTRNAASAESAKRAKQVVTSDNWTAVHPLFQDEASNLEAEREKMLARIGGYRPQETIFEVQNRRGGKGGKASEPDEALDSIKRVRSTLEAKKKQRAQAEELEATTNTDGAEVDGDAFSDLEGDNANIPDNMSLASESDLEVTFSSYNTTDKASKSNSNSKSDSTPTTLFQNPEYFMSYTPANTSLAEDRAYGVHSGTNANFASATRNATMDLQADEGGKGFGEPRTLMRWDKRHKKYVSRQNDEDGSKGTKLVRGESGAKIAATFRSGRFDAWKKGKRVGRLPRVGEAETPGLAADLGGSGGSFGGKRFRHKSEKAPKAADPLRGDYEKMKKKAEAARERAASKVGGVTSGGKSEIRNTDDIRKARKLKQKRREKNARPSRKK.

The segment at 1–48 (MPSRAASPALSENEFDITGALFQNDSDSDAETQKPTKRKKVPAAPNVN) is disordered. A Q motif motif is present at residues 91–119 (GGFQAMGLNANLLKAIARKGFSVPTPIQR). Residues 122-294 (IPVIMEDQDV…RAGLQDPTLV (173 aa)) form the Helicase ATP-binding domain. Residue 135-142 (ARTGSGKT) coordinates ATP. The DEAD box motif lies at 242 to 245 (DEAD). Disordered stretches follow at residues 337 to 363 (TEAS…EMER), 642 to 684 (EAKK…PDNM), 701 to 721 (TTDK…PTTL), and 843 to 936 (TPGL…SRKK). Positions 341–352 (LRLKEKGPEDSK) are enriched in basic and acidic residues. In terms of domain architecture, Helicase C-terminal spans 360-511 (EMERAVNMKE…SDQVNFAEDV (152 aa)). Positions 663 to 675 (AEVDGDAFSDLEG) are enriched in acidic residues. The segment covering 701 to 717 (TTDKASKSNSNSKSDST) has biased composition (low complexity). The segment covering 867–895 (EKAPKAADPLRGDYEKMKKKAEAARERAA) has biased composition (basic and acidic residues). Positions 896 to 906 (SKVGGVTSGGK) are enriched in low complexity. Over residues 907–916 (SEIRNTDDIR) the composition is skewed to basic and acidic residues. Residues 917–936 (KARKLKQKRREKNARPSRKK) are compositionally biased toward basic residues.

It belongs to the DEAD box helicase family. DDX54/DBP10 subfamily.

The protein localises to the nucleus. Its subcellular location is the nucleolus. The catalysed reaction is ATP + H2O = ADP + phosphate + H(+). Its function is as follows. ATP-binding RNA helicase involved in the biogenesis of 60S ribosomal subunits and is required for the normal formation of 25S and 5.8S rRNAs. The protein is ATP-dependent RNA helicase dbp10 (dbp10) of Emericella nidulans (strain FGSC A4 / ATCC 38163 / CBS 112.46 / NRRL 194 / M139) (Aspergillus nidulans).